Reading from the N-terminus, the 311-residue chain is Purine nucleoside phosphorylase (311 aa).

An N-acetylserine modification is found at S2. Phosphate is bound by residues S46, H81, R101 to H103, and A134. E219 contacts a purine D-ribonucleoside. S238 contacts phosphate. N261 contributes to the a purine D-ribonucleoside binding site. S275 carries the post-translational modification Phosphoserine.

Belongs to the PNP/MTAP phosphorylase family.

The enzyme catalyses a purine D-ribonucleoside + phosphate = a purine nucleobase + alpha-D-ribose 1-phosphate. Its pathway is purine metabolism; purine nucleoside salvage. The purine nucleoside phosphorylases catalyze the phosphorolytic breakdown of the N-glycosidic bond in the beta-(deoxy)ribonucleoside molecules, with the formation of the corresponding free purine bases and pentose-1-phosphate. Cleaves guanosine and inosine. This is Purine nucleoside phosphorylase (PNP1) from Saccharomyces cerevisiae (strain ATCC 204508 / S288c) (Baker's yeast).